A 77-amino-acid polypeptide reads, in one-letter code: MARVCQVTGKAPMSGNNVSHANNKTKRRFLPNLQSRRIWVESENRFVRLRISNAGLRLIDKNGIDSVLADLRARGEA.

The interval 1-25 (MARVCQVTGKAPMSGNNVSHANNKT) is disordered.

It belongs to the bacterial ribosomal protein bL28 family.

In Paraburkholderia phytofirmans (strain DSM 17436 / LMG 22146 / PsJN) (Burkholderia phytofirmans), this protein is Large ribosomal subunit protein bL28.